The primary structure comprises 309 residues: Aspartate carbamoyltransferase catalytic subunit (309 aa).

Carbamoyl phosphate is bound by residues R58 and T59. Residue K86 coordinates L-aspartate. R108, H136, and Q139 together coordinate carbamoyl phosphate. L-aspartate-binding residues include R170 and R224. Carbamoyl phosphate is bound by residues G266 and P267.

It belongs to the aspartate/ornithine carbamoyltransferase superfamily. ATCase family. Heterododecamer (2C3:3R2) of six catalytic PyrB chains organized as two trimers (C3), and six regulatory PyrI chains organized as three dimers (R2).

It carries out the reaction carbamoyl phosphate + L-aspartate = N-carbamoyl-L-aspartate + phosphate + H(+). It participates in pyrimidine metabolism; UMP biosynthesis via de novo pathway; (S)-dihydroorotate from bicarbonate: step 2/3. Functionally, catalyzes the condensation of carbamoyl phosphate and aspartate to form carbamoyl aspartate and inorganic phosphate, the committed step in the de novo pyrimidine nucleotide biosynthesis pathway. This Campylobacter concisus (strain 13826) protein is Aspartate carbamoyltransferase catalytic subunit.